The primary structure comprises 419 residues: Metacaspase-1A (419 aa).

A disordered region spans residues 1–89; that stretch reads MHHQQSSYGG…PPDQPVSFGQ (89 aa). Positions 41–51 are enriched in polar residues; it reads NGYNSPQQNYG. The segment covering 59-71 has biased composition (low complexity); it reads YQQQSAYQNSYNQ. Residues His-190 and Cys-246 contribute to the active site.

The protein belongs to the peptidase C14B family.

Involved in cell death (apoptosis). This Aspergillus oryzae (strain ATCC 42149 / RIB 40) (Yellow koji mold) protein is Metacaspase-1A (casA).